The chain runs to 179 residues: MSANLQNENPEVKELNQLPSRVEEEEDLLLSSTKQWLTEIESEQTNIKEERDPIDPQEIYDLLAKINDPEHPLTLAQLSVVKLEDIEVVDNVEGDSYITVHITPTIPHCSMCTLIGLCIRVRLERCLPPRFHVDVKVKKGTHASESQVNKQLNDKERVAAACENEQLLSVLNGMMATCV.

The tract at residues 1-26 is disordered; that stretch reads MSANLQNENPEVKELNQLPSRVEEEE.

This sequence belongs to the MIP18 family.

Functionally, may play a role in chromosome segregation through establishment of sister chromatid cohesion. This is MIP18 family protein C144.16 from Schizosaccharomyces pombe (strain 972 / ATCC 24843) (Fission yeast).